Consider the following 431-residue polypeptide: Histidinol dehydrogenase (431 aa).

NAD(+)-binding residues include Tyr127, Gln190, and Asn213. Substrate is bound by residues Ser238, Gln260, and His263. The Zn(2+) site is built by Gln260 and His263. Active-site proton acceptor residues include Glu329 and His330. Substrate-binding residues include His330, Asp363, Glu417, and His422. Asp363 provides a ligand contact to Zn(2+). Zn(2+) is bound at residue His422.

Belongs to the histidinol dehydrogenase family. The cofactor is Zn(2+).

It catalyses the reaction L-histidinol + 2 NAD(+) + H2O = L-histidine + 2 NADH + 3 H(+). It functions in the pathway amino-acid biosynthesis; L-histidine biosynthesis; L-histidine from 5-phospho-alpha-D-ribose 1-diphosphate: step 9/9. Its function is as follows. Catalyzes the sequential NAD-dependent oxidations of L-histidinol to L-histidinaldehyde and then to L-histidine. The polypeptide is Histidinol dehydrogenase (Methanopyrus kandleri (strain AV19 / DSM 6324 / JCM 9639 / NBRC 100938)).